The chain runs to 1372 residues: Serine protease pic autotransporter (1372 aa).

A signal peptide spans 1 to 55 (MNKVYSLKYCPVTGGLIAVSELARRVIKKTCRRLTHILLAGIPAICLCYSQISQA). The Peptidase S6 domain maps to 56-301 (GIVRSDIAYQ…NVIPTDYLNQ (246 aa)). Catalysis depends on charge relay system residues His-127, Asp-155, and Ser-258. One can recognise an Autotransporter domain in the interval 1106 to 1372 (DTNGDAGAWA…AVNANFRYMF (267 aa)).

In terms of processing, cleaved to release the mature protein from the outer membrane.

It is found in the periplasm. Its subcellular location is the secreted. It localises to the cell surface. The protein localises to the cell outer membrane. Functionally, involved in intestinal colonization, displays in vitro mucinolytic activity, serum resistance, and hemagglutination. Important to penetrate the intestinal mucus layer. This Shigella flexneri protein is Serine protease pic autotransporter (pic).